A 54-amino-acid polypeptide reads, in one-letter code: Large ribosomal subunit protein bL33 (54 aa).

Belongs to the bacterial ribosomal protein bL33 family.

In Corynebacterium urealyticum (strain ATCC 43042 / DSM 7109), this protein is Large ribosomal subunit protein bL33.